Consider the following 143-residue polypeptide: Large ribosomal subunit protein uL15 (143 aa).

Positions 1–57 (MQLNNLKPAAGSKHAKRRVGRGIGSGLGKTAGRGHKGQKSRSGGFHKVGFEGGQMPL) are disordered. The segment covering 21–31 (RGIGSGLGKTA) has biased composition (gly residues).

It belongs to the universal ribosomal protein uL15 family. Part of the 50S ribosomal subunit.

In terms of biological role, binds to the 23S rRNA. This Ralstonia pickettii (strain 12J) protein is Large ribosomal subunit protein uL15.